A 570-amino-acid polypeptide reads, in one-letter code: L-ascorbate oxidase (570 aa).

An N-terminal signal peptide occupies residues 1–18; it reads MGMWWIVAVAILAHTASA. 2 Plastocyanin-like domains span residues 33–140 and 154–317; these read WPDC…IIDV and FNLL…LNYV. 3 disulfide bridges follow: C36/C219, C98/C557, and C197/C211. Residues H77 and H79 each contribute to the Cu cation site. The N-linked (GlcNAc...) asparagine glycan is linked to N109. Positions 121 and 123 each coordinate Cu cation. N-linked (GlcNAc...) asparagine glycosylation is present at N196. 7 N-linked (GlcNAc...) asparagine glycosylation sites follow: N229, N343, N384, N407, N434, N442, and N458. The Plastocyanin-like 3 domain maps to 426 to 543; the sequence is RNRNAKQGNV…MGMGVVFAEG (118 aa). Cu cation-binding residues include H463, H466, H468, H525, C526, H527, H531, and M536.

It belongs to the multicopper oxidase family. In terms of assembly, dimer. It depends on Cu cation as a cofactor.

The protein localises to the secreted. It carries out the reaction 4 L-ascorbate + O2 = 4 monodehydro-L-ascorbate radical + 2 H2O. Its pathway is cofactor degradation; L-ascorbate degradation. Ascorbate oxidase involved in a redox system involving ascorbic acid (AsA). The oxidation of AsA represses responses to high salinity and oxidative stress conditions such as vegetative growth and seed production reductions. Negative regulator of defense responses toward incompatible Turnip mosaic virus (TuMV strain UK1) by preventing jasmonic acid (JA)- dependent accumulation of ascorbic acid (AsA, AS) and dehydroascobic acid (DHA). The polypeptide is L-ascorbate oxidase (Brassica rapa subsp. pekinensis (Chinese cabbage)).